We begin with the raw amino-acid sequence, 344 residues long: Fructose-1,6-bisphosphatase class 1 (344 aa).

Mg(2+) is bound by residues glutamate 92, aspartate 115, leucine 117, and aspartate 118. Substrate is bound by residues 118-121 (DGSS), asparagine 211, tyrosine 244, and lysine 274. Glutamate 280 contributes to the Mg(2+) binding site.

This sequence belongs to the FBPase class 1 family. Homotetramer. It depends on Mg(2+) as a cofactor.

The protein localises to the cytoplasm. It catalyses the reaction beta-D-fructose 1,6-bisphosphate + H2O = beta-D-fructose 6-phosphate + phosphate. It functions in the pathway carbohydrate biosynthesis; gluconeogenesis. The chain is Fructose-1,6-bisphosphatase class 1 from Aeromonas salmonicida (strain A449).